The sequence spans 273 residues: Dermonecrotic toxin LhSicTox-alphaIA1ii (273 aa).

H5 is a catalytic residue. E25 and D27 together coordinate Mg(2+). H41 functions as the Nucleophile in the catalytic mechanism. Cystine bridges form between C45–C51 and C47–C190. Mg(2+) is bound at residue D85.

It belongs to the arthropod phospholipase D family. Class II subfamily. The cofactor is Mg(2+). Expressed by the venom gland.

The protein resides in the secreted. It catalyses the reaction an N-(acyl)-sphingosylphosphocholine = an N-(acyl)-sphingosyl-1,3-cyclic phosphate + choline. The enzyme catalyses an N-(acyl)-sphingosylphosphoethanolamine = an N-(acyl)-sphingosyl-1,3-cyclic phosphate + ethanolamine. It carries out the reaction a 1-acyl-sn-glycero-3-phosphocholine = a 1-acyl-sn-glycero-2,3-cyclic phosphate + choline. The catalysed reaction is a 1-acyl-sn-glycero-3-phosphoethanolamine = a 1-acyl-sn-glycero-2,3-cyclic phosphate + ethanolamine. Its function is as follows. Dermonecrotic toxins cleave the phosphodiester linkage between the phosphate and headgroup of certain phospholipids (sphingolipid and lysolipid substrates), forming an alcohol (often choline) and a cyclic phosphate. This toxin acts on sphingomyelin (SM). It may also act on ceramide phosphoethanolamine (CPE), lysophosphatidylcholine (LPC) and lysophosphatidylethanolamine (LPE), but not on lysophosphatidylserine (LPS), and lysophosphatidylglycerol (LPG). It acts by transphosphatidylation, releasing exclusively cyclic phosphate products as second products. Induces dermonecrosis, hemolysis, increased vascular permeability, edema, inflammatory response, and platelet aggregation. The chain is Dermonecrotic toxin LhSicTox-alphaIA1ii from Loxosceles hirsuta (Recluse spider).